We begin with the raw amino-acid sequence, 55 residues long: Large ribosomal subunit protein bL33 (55 aa).

Residues 1-11 show a composition bias toward basic and acidic residues; sequence MAKGARDKIKL. The disordered stretch occupies residues 1 to 24; that stretch reads MAKGARDKIKLESTAGTGHFYTTT. A compositionally biased stretch (polar residues) spans 14-24; it reads TAGTGHFYTTT.

The protein belongs to the bacterial ribosomal protein bL33 family.

The chain is Large ribosomal subunit protein bL33 from Burkholderia multivorans (strain ATCC 17616 / 249).